The sequence spans 965 residues: Phosphatidylethanolamine N-methyltransferase (965 aa).

The Lumenal portion of the chain corresponds to 1 to 82 (MDRGLSTGTN…SPSEPKNLSD (82 aa)). A disordered region spans residues 34–54 (PTVTNASNGKDKAGKTFGRTP). A helical transmembrane segment spans residues 83-103 (LVVLTILAGHIFLLWILPSGA). Over 104–106 (KIP) the chain is Cytoplasmic. Residues 107 to 127 (VFAVIYLFWRSCYNAGIGWLL) traverse the membrane as a helical segment. The Lumenal segment spans residues 128–192 (HNQSHHKTLV…EYNTWLVFRR (65 aa)). A helical membrane pass occupies residues 193–213 (LVDLILMCDFASYCLFAIACS). The Cytoplasmic portion of the chain corresponds to 214-220 (RHPANES). Residues 221 to 241 (VLMTVIRWTSGIALVLFNLWV) traverse the membrane as a helical segment. The Lumenal portion of the chain corresponds to 242 to 274 (KLDAHRVVKDYAWYWGDFFYLIDQELTFDGVFE). The chain crosses the membrane as a helical span at residues 275–295 (MAPHPMYSVGYAGYYGISLMA). Residues 296-297 (AS) lie on the Cytoplasmic side of the membrane. A helical transmembrane segment spans residues 298 to 318 (YKVLFISIIAHAAQFAFLVLV). Residues 319-394 (ENPHIDKTYN…LDLHRITDTS (76 aa)) lie on the Lumenal side of the membrane. Residues 326-368 (TYNPPPPRKRTITEHDAASQRSQSPDTPNAPSVSEENVPNATT) form a disordered region. A compositionally biased stretch (polar residues) spans 344–368 (SQRSQSPDTPNAPSVSEENVPNATT). A helical transmembrane segment spans residues 395–415 (SILVQFLMFSLTVLTPSTPWY). Residue Gln-416 is a topological domain, cytoplasmic. The chain crosses the membrane as a helical span at residues 417–437 (FLFVANAAIWRLWYSVGIGYL). Over 438–470 (LNRQSNCKSWTRHFVKYGETPHEAWNQWKGTYH) the chain is Lumenal. A helical transmembrane segment spans residues 471–491 (LSMVMCYASFISAVWKMYTLP). Residues 492-503 (SNWGYGLAILRH) lie on the Cytoplasmic side of the membrane. A helical transmembrane segment spans residues 504 to 524 (VLGAGLISLQIWTSVSIYESL). Residues 525 to 559 (GEFGWFYGDFFFDESPKLTYNGIYRFLNNPERVLG) lie on the Lumenal side of the membrane. A helical membrane pass occupies residues 560-580 (LAGVWGAVLITASGTVAFLAF). Topologically, residues 581-965 (LSHILSLGFI…GATTPTESKE (385 aa)) are cytoplasmic.

It belongs to the class VI-like SAM-binding methyltransferase superfamily. CHO2 family.

It localises to the endoplasmic reticulum membrane. It carries out the reaction a 1,2-diacyl-sn-glycero-3-phosphoethanolamine + S-adenosyl-L-methionine = a 1,2-diacyl-sn-glycero-3-phospho-N-methylethanolamine + S-adenosyl-L-homocysteine + H(+). It participates in phospholipid metabolism; phosphatidylcholine biosynthesis. Functionally, catalyzes the first step of the methylation pathway of phosphatidylcholine biosynthesis, the SAM-dependent methylation of phosphatidylethanolamine (PE) to phosphatidylmonomethylethanolamine (PMME). The polypeptide is Phosphatidylethanolamine N-methyltransferase (Emericella nidulans (strain FGSC A4 / ATCC 38163 / CBS 112.46 / NRRL 194 / M139) (Aspergillus nidulans)).